The chain runs to 382 residues: Sialidase (382 aa).

Residue Arg-37 coordinates substrate. Asp-62 serves as the catalytic Proton acceptor. BNR repeat units lie at residues 71 to 82 (ARSTDFGKTWSY), 140 to 151 (IYSDDNGLTWSN), and 208 to 219 (IYSKDNGETWTM). Arg-245 lines the substrate pocket. Residues 255–266 (YISHDLGTTWEI) form a BNR 4 repeat. Residue Tyr-347 is the Nucleophile of the active site.

The protein belongs to the glycosyl hydrolase 33 family.

The protein localises to the secreted. It catalyses the reaction Hydrolysis of alpha-(2-&gt;3)-, alpha-(2-&gt;6)-, alpha-(2-&gt;8)- glycosidic linkages of terminal sialic acid residues in oligosaccharides, glycoproteins, glycolipids, colominic acid and synthetic substrates.. Its function is as follows. Sialidases have been suggested to be pathogenic factors in microbial infections. This Clostridium perfringens protein is Sialidase (nanH).